The chain runs to 391 residues: Succinyl-diaminopimelate desuccinylase (391 aa).

Position 78 (His-78) interacts with Zn(2+). Residue Asp-80 is part of the active site. A Zn(2+)-binding site is contributed by Asp-111. Glu-145 (proton acceptor) is an active-site residue. 3 residues coordinate Zn(2+): Glu-146, Glu-174, and His-360.

This sequence belongs to the peptidase M20A family. DapE subfamily. In terms of assembly, homodimer. The cofactor is Zn(2+). Co(2+) serves as cofactor.

The catalysed reaction is N-succinyl-(2S,6S)-2,6-diaminopimelate + H2O = (2S,6S)-2,6-diaminopimelate + succinate. Its pathway is amino-acid biosynthesis; L-lysine biosynthesis via DAP pathway; LL-2,6-diaminopimelate from (S)-tetrahydrodipicolinate (succinylase route): step 3/3. Functionally, catalyzes the hydrolysis of N-succinyl-L,L-diaminopimelic acid (SDAP), forming succinate and LL-2,6-diaminopimelate (DAP), an intermediate involved in the bacterial biosynthesis of lysine and meso-diaminopimelic acid, an essential component of bacterial cell walls. The protein is Succinyl-diaminopimelate desuccinylase of Albidiferax ferrireducens (strain ATCC BAA-621 / DSM 15236 / T118) (Rhodoferax ferrireducens).